Reading from the N-terminus, the 151-residue chain is Arginine repressor (151 aa).

It belongs to the ArgR family.

It localises to the cytoplasm. It participates in amino-acid biosynthesis; L-arginine biosynthesis [regulation]. In terms of biological role, regulates arginine biosynthesis genes. The chain is Arginine repressor from Haemophilus influenzae (strain PittGG).